A 230-amino-acid chain; its full sequence is Urease accessory protein UreE (230 aa).

Basic and acidic residues-rich tracts occupy residues 182–193 and 204–230; these read HVHVDSPLDEPH and SHGD…DHKH. The tract at residues 182–230 is disordered; it reads HVHVDSPLDEPHGSGLHVHAIHSHGDGHSHSHSHDHDHDHRHDDHDHKH.

The protein belongs to the UreE family.

Its subcellular location is the cytoplasm. Functionally, involved in urease metallocenter assembly. Binds nickel. Probably functions as a nickel donor during metallocenter assembly. The chain is Urease accessory protein UreE from Yersinia mollaretii.